A 445-amino-acid polypeptide reads, in one-letter code: Phosphoglucosamine mutase (445 aa).

The active-site Phosphoserine intermediate is the Ser102. Ser102, Asp240, Asp242, and Asp244 together coordinate Mg(2+). The residue at position 102 (Ser102) is a Phosphoserine.

It belongs to the phosphohexose mutase family. Mg(2+) serves as cofactor. In terms of processing, activated by phosphorylation.

It carries out the reaction alpha-D-glucosamine 1-phosphate = D-glucosamine 6-phosphate. Its function is as follows. Catalyzes the conversion of glucosamine-6-phosphate to glucosamine-1-phosphate. This chain is Phosphoglucosamine mutase, found in Mycobacterium marinum (strain ATCC BAA-535 / M).